The primary structure comprises 429 residues: GTPase Obg (429 aa).

Positions 1 to 158 constitute an Obg domain; sequence MFVDQVKIYV…RNVQLELKVL (158 aa). A disordered region spans residues 124-145; the sequence is RGNKRFATPANPAPELSENGEP. The 171-residue stretch at 159 to 329 folds into the OBG-type G domain; sequence ADVGLVGFPS…LLLAIADKLE (171 aa). GTP is bound by residues 165–172, 190–194, 212–215, 282–285, and 310–312; these read GFPSVGKS, FTTIV, DLPG, NKMD, and SAV. The Mg(2+) site is built by Ser-172 and Thr-192. An OCT domain is found at 351–429; it reads KYIAEEPDFE…LLDYEFEFMD (79 aa).

Belongs to the TRAFAC class OBG-HflX-like GTPase superfamily. OBG GTPase family. Monomer. Requires Mg(2+) as cofactor.

It is found in the cytoplasm. In terms of biological role, an essential GTPase which binds GTP, GDP and possibly (p)ppGpp with moderate affinity, with high nucleotide exchange rates and a fairly low GTP hydrolysis rate. Plays a role in control of the cell cycle, stress response, ribosome biogenesis and in those bacteria that undergo differentiation, in morphogenesis control. This is GTPase Obg from Listeria welshimeri serovar 6b (strain ATCC 35897 / DSM 20650 / CCUG 15529 / CIP 8149 / NCTC 11857 / SLCC 5334 / V8).